Reading from the N-terminus, the 322-residue chain is MVTVLDTVSKPRPRHPEKAHRPDQEVLRKPDWIRVKAPTSRGYLETREIVKTNKLVTVCEEAGCPNIGECWDKKHATFMIMGEICTRACAFCNVATGIPGPLDPNEPANVAKAVREMGLNHVVITSVDRDDLNDGGAQHFADVIQAIRAATPQTTIEILTPDFLRKDGALELVVAAKPDVFNHNLETVPSKYLTVRPGARYFHSIRLLQRVKEIDPSIFTKSGIMVGLGEERNEVLQLMDDLRSADVDFITIGQYLQPTKKHHPVKKFVTPEEFKSYETIAYTKGFLMASSSPLTRSSHHAGEDFERLRAAREARLSLAKTA.

A disordered region spans residues 1–24 (MVTVLDTVSKPRPRHPEKAHRPDQ). The segment covering 14–24 (RHPEKAHRPDQ) has biased composition (basic and acidic residues). Positions 59, 64, 70, 85, 89, 92, and 298 each coordinate [4Fe-4S] cluster. The Radical SAM core domain occupies 71–287 (WDKKHATFMI…ETIAYTKGFL (217 aa)).

Belongs to the radical SAM superfamily. Lipoyl synthase family. It depends on [4Fe-4S] cluster as a cofactor.

It localises to the cytoplasm. The catalysed reaction is [[Fe-S] cluster scaffold protein carrying a second [4Fe-4S](2+) cluster] + N(6)-octanoyl-L-lysyl-[protein] + 2 oxidized [2Fe-2S]-[ferredoxin] + 2 S-adenosyl-L-methionine + 4 H(+) = [[Fe-S] cluster scaffold protein] + N(6)-[(R)-dihydrolipoyl]-L-lysyl-[protein] + 4 Fe(3+) + 2 hydrogen sulfide + 2 5'-deoxyadenosine + 2 L-methionine + 2 reduced [2Fe-2S]-[ferredoxin]. It functions in the pathway protein modification; protein lipoylation via endogenous pathway; protein N(6)-(lipoyl)lysine from octanoyl-[acyl-carrier-protein]: step 2/2. Functionally, catalyzes the radical-mediated insertion of two sulfur atoms into the C-6 and C-8 positions of the octanoyl moiety bound to the lipoyl domains of lipoate-dependent enzymes, thereby converting the octanoylated domains into lipoylated derivatives. The chain is Lipoyl synthase from Chelativorans sp. (strain BNC1).